A 104-amino-acid polypeptide reads, in one-letter code: Protein P3 (104 aa).

Residues 77–99 (LVFGVPQKTLLLGFGGLLVLGLV) traverse the membrane as a helical segment.

As to quaternary structure, homodimer.

The protein localises to the virion membrane. The polypeptide is Protein P3 (III) (Pseudoalteromonas phage PM2 (Bacteriophage PM2)).